A 538-amino-acid polypeptide reads, in one-letter code: AAA ATPase forming ring-shaped complexes (538 aa).

Positions 14 to 54 form a coiled coil; that stretch reads ARELRLANHRLGAQNEKLTEALKASREKLAEINSRLADMAE. 240-245 provides a ligand contact to ATP; the sequence is GNGKTL.

This sequence belongs to the AAA ATPase family. Homohexamer. Assembles into a hexameric ring structure.

This is AAA ATPase forming ring-shaped complexes from Corynebacterium urealyticum (strain ATCC 43042 / DSM 7109).